The chain runs to 155 residues: S-ribosylhomocysteine lyase (155 aa).

Residues histidine 58, histidine 62, and cysteine 125 each contribute to the Fe cation site.

The protein belongs to the LuxS family. In terms of assembly, homodimer. Requires Fe cation as cofactor.

It carries out the reaction S-(5-deoxy-D-ribos-5-yl)-L-homocysteine = (S)-4,5-dihydroxypentane-2,3-dione + L-homocysteine. Functionally, involved in the synthesis of autoinducer 2 (AI-2) which is secreted by bacteria and is used to communicate both the cell density and the metabolic potential of the environment. The regulation of gene expression in response to changes in cell density is called quorum sensing. Catalyzes the transformation of S-ribosylhomocysteine (RHC) to homocysteine (HC) and 4,5-dihydroxy-2,3-pentadione (DPD). The chain is S-ribosylhomocysteine lyase from Chromohalobacter salexigens (strain ATCC BAA-138 / DSM 3043 / CIP 106854 / NCIMB 13768 / 1H11).